The chain runs to 505 residues: DNA primase large subunit (505 aa).

Residues 253–270 (LSHSYTGQDYSTQKNTGK) form an interdomain linker region. The interval 266 to 503 (KNTGKISLDQ…LEMDLEGLEE (238 aa)) is interacts with PRIM1. [4Fe-4S] cluster is bound by residues Cys287, Cys367, Cys384, and Cys424. An RNA:DNA duplex binding region spans residues 300-442 (HLRHGGRMQY…NVDDCGFSLN (143 aa)). The tract at residues 463-486 (KEISQPETPQHKPSTQKTRDAASA) is disordered. Residues 467 to 478 (QPETPQHKPSTQ) are compositionally biased toward polar residues. Position 470 is a phosphothreonine (Thr470).

Belongs to the eukaryotic-type primase large subunit family. Heterodimer of a catalytic subunit PRIM1 and a regulatory subunit PRIM2, also known as the DNA primase complex. Interacts via (C-terminus) with PRIM1. Component of the alpha DNA polymerase complex (also known as the alpha DNA polymerase-primase complex) consisting of four subunits: the catalytic subunit POLA1, the regulatory subunit POLA2, and the primase complex subunits PRIM1 and PRIM2 respectively. Within the complex, POLA1 directly interacts with PRIM2. Requires [4Fe-4S] cluster as cofactor.

Functionally, regulatory subunit of the DNA primase complex and component of the DNA polymerase alpha complex (also known as the alpha DNA polymerase-primase complex) which play an essential role in the initiation of DNA synthesis. During the S phase of the cell cycle, the DNA polymerase alpha complex (composed of a catalytic subunit POLA1, an accessory subunit POLA2 and two primase subunits, the catalytic subunit PRIM1 and the regulatory subunit PRIM2) is recruited to DNA at the replicative forks via direct interactions with MCM10 and WDHD1. The primase subunit of the polymerase alpha complex initiates DNA synthesis by oligomerising short RNA primers on both leading and lagging strands. These primers are initially extended by the polymerase alpha catalytic subunit and subsequently transferred to polymerase delta and polymerase epsilon for processive synthesis on the lagging and leading strand, respectively. In the primase complex, both subunits are necessary for the initial di-nucleotide formation, but the extension of the primer depends only on the catalytic subunit. Binds RNA:DNA duplex and coordinates the catalytic activities of PRIM1 and POLA2 during primase-to-polymerase switch. The sequence is that of DNA primase large subunit (Prim2) from Mus musculus (Mouse).